We begin with the raw amino-acid sequence, 483 residues long: Scarecrow-like protein 26 (483 aa).

Residues 95 to 477 enclose the GRAS domain; the sequence is KTDESKGLRL…RRLVSASFWA (383 aa). Residues 102–165 are leucine repeat I (LRI); the sequence is LRLVHLLVAA…SKLLERDSVL (64 aa). The tract at residues 184 to 251 is VHIID; that stretch reads FELLQNMSPY…PSAQHLRITA (68 aa). Residues 215 to 219 carry the VHIID motif; sequence IHIVD. Residues 267–299 are leucine repeat II (LRII); the sequence is ETGRRLTAFADSIGQPFSYQHCKLDTNAFSTSS. Positions 308 to 400 are PFYRE; that stretch reads VVINCMLHLP…RVFIGPWVAN (93 aa). The interval 403-477 is SAW; sequence TRITANDAEV…RRLVSASFWA (75 aa).

This sequence belongs to the GRAS family. Expressed in seedlings, roots, leaves and flowers.

The protein resides in the nucleus. In terms of biological role, probable transcription factor involved in plant development. The chain is Scarecrow-like protein 26 (SCL26) from Arabidopsis thaliana (Mouse-ear cress).